A 301-amino-acid polypeptide reads, in one-letter code: N-acetylmuramic acid 6-phosphate etherase (301 aa).

In terms of domain architecture, SIS spans 57–220; that stretch reads TYEKMLFGGR…STSLMIKKGK (164 aa). The active-site Proton donor is Glu85. Glu116 is an active-site residue.

It belongs to the GCKR-like family. MurNAc-6-P etherase subfamily. Homodimer.

The enzyme catalyses N-acetyl-D-muramate 6-phosphate + H2O = N-acetyl-D-glucosamine 6-phosphate + (R)-lactate. It participates in amino-sugar metabolism; N-acetylmuramate degradation. In terms of biological role, specifically catalyzes the cleavage of the D-lactyl ether substituent of MurNAc 6-phosphate, producing GlcNAc 6-phosphate and D-lactate. This is N-acetylmuramic acid 6-phosphate etherase from Clostridium botulinum (strain Eklund 17B / Type B).